The primary structure comprises 174 residues: Transcription antitermination protein NusB (174 aa).

The protein belongs to the NusB family.

Its function is as follows. Involved in transcription antitermination. Required for transcription of ribosomal RNA (rRNA) genes. Binds specifically to the boxA antiterminator sequence of the ribosomal RNA (rrn) operons. This Rhodopseudomonas palustris (strain TIE-1) protein is Transcription antitermination protein NusB.